Consider the following 172-residue polypeptide: NAD(P)H-quinone oxidoreductase subunit I, chloroplastic (172 aa).

4Fe-4S ferredoxin-type domains follow at residues 55-84 (GRIHFEFDKCIACEVCVRVCPIDLPVVDWK) and 95-124 (LNYSIDFGICIFCGNCVEYCPTNCLSMTEE). [4Fe-4S] cluster-binding residues include Cys-64, Cys-67, Cys-70, Cys-74, Cys-104, Cys-107, Cys-110, and Cys-114.

This sequence belongs to the complex I 23 kDa subunit family. NDH is composed of at least 16 different subunits, 5 of which are encoded in the nucleus. Requires [4Fe-4S] cluster as cofactor.

The protein localises to the plastid. It localises to the chloroplast thylakoid membrane. It catalyses the reaction a plastoquinone + NADH + (n+1) H(+)(in) = a plastoquinol + NAD(+) + n H(+)(out). It carries out the reaction a plastoquinone + NADPH + (n+1) H(+)(in) = a plastoquinol + NADP(+) + n H(+)(out). Its function is as follows. NDH shuttles electrons from NAD(P)H:plastoquinone, via FMN and iron-sulfur (Fe-S) centers, to quinones in the photosynthetic chain and possibly in a chloroplast respiratory chain. The immediate electron acceptor for the enzyme in this species is believed to be plastoquinone. Couples the redox reaction to proton translocation, and thus conserves the redox energy in a proton gradient. This is NAD(P)H-quinone oxidoreductase subunit I, chloroplastic from Olimarabidopsis pumila (Dwarf rocket).